A 406-amino-acid polypeptide reads, in one-letter code: Lymphocyte transmembrane adapter 1 (406 aa).

The tract at residues 1 to 25 (MYTTPAPPEITRRSSEPSTQQGTLG) is disordered. Residues 1-33 (MYTTPAPPEITRRSSEPSTQQGTLGSLEGEKGH) are Extracellular-facing. The helical; Signal-anchor for type III membrane protein transmembrane segment at 34–54 (LLFPGFVVLVTIFLVVIVTCI) threads the bilayer. Residues 55 to 406 (LWSRKKQKKR…LATETSGEEV (352 aa)) are Cytoplasmic-facing. The disordered stretch occupies residues 109 to 131 (ESLLSRASDSPEPEVPQASGSLQ). Position 184 is a phosphotyrosine (Tyr-184). Residues 219 to 258 (AEGGHAGCGKATDRTGVWAPGLQGSNSLSEGDDSSQSSND) are disordered. Over residues 242–258 (GSNSLSEGDDSSQSSND) the composition is skewed to low complexity. 3 positions are modified to phosphotyrosine: Tyr-259, Tyr-285, and Tyr-352. The interval 358–406 (PELEGKDWKQGPGTWHPSDERTPSDQAGKFCEAVYPAGSLATETSGEEV) is disordered.

When phosphorylated, interacts with GRB2, PIK3R1 and GRAP2. Post-translationally, phosphorylated on tyrosines upon TCR or BCR activation; which leads to the recruitment of GRB2, PIK3R1 and GRAP2.

It is found in the cell membrane. In terms of biological role, negatively regulates TCR (T-cell antigen receptor)-mediated signaling in T-cells and BCR (B-cell antigen receptor)-mediated signaling in B-cells. The chain is Lymphocyte transmembrane adapter 1 (Lax1) from Rattus norvegicus (Rat).